Reading from the N-terminus, the 139-residue chain is MTIRLSDEARQLIAVFETETDATAVDCLPDDDRVVYVVTAGEMGAAIGDGGSRVDALEATLGRSVVLVEDAPTAEGFVANALSPAAVYNVTVSENDTTVAYAEVAHEDKGVAIGADGTNIETAKELAARHFDIDDIQLT.

The KH domain occupies 31–97 (DDRVVYVVTA…YNVTVSENDT (67 aa)).

Belongs to the NusA family.

Its subcellular location is the cytoplasm. In terms of biological role, participates in transcription termination. The chain is Probable transcription termination protein NusA from Halobacterium salinarum (strain ATCC 29341 / DSM 671 / R1).